The chain runs to 762 residues: uncharacterized protein (762 aa).

The interval 734–762 (QQRPRVAAAAPPPPPQPPAAAVPTTQAST) is disordered. The segment covering 743–753 (APPPPPQPPAA) has biased composition (pro residues).

This is an uncharacterized protein from Ostreid herpesvirus 1 (isolate France) (OsHV-1).